The chain runs to 434 residues: Alpha-enolase (434 aa).

Ser2 carries the N-acetylserine modification. The residue at position 5 (Lys5) is an N6-acetyllysine. Ser40 contributes to the Mg(2+) binding site. Tyr44 carries the phosphotyrosine modification. Lys60 carries the post-translational modification N6-acetyllysine; alternate. Lys60 is subject to N6-succinyllysine; alternate. N6-acetyllysine is present on residues Lys64 and Lys71. Lys89 carries the N6-acetyllysine; alternate modification. N6-succinyllysine; alternate is present on Lys89. Lys126 bears the N6-acetyllysine mark. The substrate site is built by His158 and Glu167. N6-acetyllysine is present on residues Lys193 and Lys199. The residue at position 202 (Lys202) is an N6-acetyllysine; alternate. A Glycyl lysine isopeptide (Lys-Gly) (interchain with G-Cter in SUMO2); alternate cross-link involves residue Lys202. The Proton donor role is filled by Glu210. Residues Lys228 and Lys233 each carry the N6-acetyllysine; alternate modification. N6-succinyllysine; alternate is present on Lys228. Residue Lys228 is modified to N6-(2-hydroxyisobutyryl)lysine; alternate. N6-malonyllysine; alternate is present on Lys233. Position 245 (Asp245) interacts with Mg(2+). An N6-acetyllysine modification is found at Lys256. Ser263 is modified (phosphoserine). Residue Lys281 is modified to N6-acetyllysine; alternate. Residue Lys281 is modified to N6-(2-hydroxyisobutyryl)lysine; alternate. At Lys285 the chain carries N6-acetyllysine. The residue at position 287 (Tyr287) is a Phosphotyrosine. Ser291 is modified (phosphoserine). Mg(2+) is bound by residues Glu293 and Asp318. 2 residues coordinate substrate: Glu293 and Asp318. Residues Lys335 and Lys343 each carry the N6-acetyllysine modification. Residue Lys343 is the Proton acceptor of the active site. Substrate contacts are provided by residues 370–373 and Lys394; that span reads SHRS. Residues 405–434 form a required for interaction with PLG region; it reads AKYNQILRIEEELGSKAKFAGRSFRNPLAK. The residue at position 406 (Lys406) is an N6-acetyllysine. Lys420 carries the N6-acetyllysine; alternate modification. Position 420 is an N6-succinyllysine; alternate (Lys420). Lys420 carries the post-translational modification N6-malonyllysine; alternate.

The protein belongs to the enolase family. As to quaternary structure, mammalian enolase is composed of 3 isozyme subunits, alpha, beta and gamma, which can form homodimers or heterodimers which are cell-type and development-specific. ENO1 interacts with PLG in the neuronal plasma membrane and promotes its activation. The C-terminal lysine is required for this binding. Interacts with ENO4 and PGAM2. Interacts with CMTM6. The cofactor is Mg(2+). Post-translationally, ISGylated. In terms of processing, lysine 2-hydroxyisobutyrylation (Khib) by p300/EP300 activates the phosphopyruvate hydratase activity. As to expression, expressed in flagella of epididymal sperm. The alpha/alpha homodimer is expressed in embryo and in most adult tissues. The alpha/beta heterodimer and the beta/beta homodimer are found in striated muscle, and the alpha/gamma heterodimer and the gamma/gamma homodimer in neurons.

The protein localises to the cytoplasm. The protein resides in the cell membrane. The enzyme catalyses (2R)-2-phosphoglycerate = phosphoenolpyruvate + H2O. Its pathway is carbohydrate degradation; glycolysis; pyruvate from D-glyceraldehyde 3-phosphate: step 4/5. Glycolytic enzyme that catalyzes the conversion of 2-phosphoglycerate to phosphoenolpyruvate. In addition to glycolysis, involved in various processes such as growth control, hypoxia tolerance and allergic responses. May also function in the intravascular and pericellular fibrinolytic system due to its ability to serve as a receptor and activator of plasminogen on the cell surface of several cell-types such as leukocytes and neurons. Stimulates immunoglobulin production. In Rattus norvegicus (Rat), this protein is Alpha-enolase (Eno1).